The chain runs to 578 residues: Arginine--tRNA ligase (578 aa).

The 'HIGH' region motif lies at 127–137; it reads PNLAKEMHVGH.

Belongs to the class-I aminoacyl-tRNA synthetase family. Monomer.

Its subcellular location is the cytoplasm. The enzyme catalyses tRNA(Arg) + L-arginine + ATP = L-arginyl-tRNA(Arg) + AMP + diphosphate. The sequence is that of Arginine--tRNA ligase from Pseudomonas fluorescens (strain ATCC BAA-477 / NRRL B-23932 / Pf-5).